We begin with the raw amino-acid sequence, 299 residues long: MLDNTRLRIAIQKSGRLSDDSRELLARCGIKINLHTQRLIAMAENMPIDILRVRDDDIPGLVMDGVVDLGIIGENVLEEELLNRRAQGEDPRYLTLRRLDFGGCRLSLATPVDEAWDGPAALDGKRIATSYPHLLKRYLDQKGVSFKSCLLNGSVEVAPRAGLADAICDLVSTGATLEANGLREVEVIYRSKACLIQRDGEMAQSKQELIDKLLTRIQGVIQARESKYIMMHAPSERLEEVIALLPGAERPTILPLAGEQQRVAMHMVSSETLFWETMEKLKALGASSILVLPIEKMME.

This sequence belongs to the ATP phosphoribosyltransferase family. Long subfamily. As to quaternary structure, equilibrium between an active dimeric form, an inactive hexameric form and higher aggregates. Interconversion between the various forms is largely reversible and is influenced by the natural substrates and inhibitors of the enzyme. Mg(2+) is required as a cofactor.

It localises to the cytoplasm. The catalysed reaction is 1-(5-phospho-beta-D-ribosyl)-ATP + diphosphate = 5-phospho-alpha-D-ribose 1-diphosphate + ATP. Its pathway is amino-acid biosynthesis; L-histidine biosynthesis; L-histidine from 5-phospho-alpha-D-ribose 1-diphosphate: step 1/9. Its activity is regulated as follows. Feedback inhibited by histidine. In terms of biological role, catalyzes the condensation of ATP and 5-phosphoribose 1-diphosphate to form N'-(5'-phosphoribosyl)-ATP (PR-ATP). Has a crucial role in the pathway because the rate of histidine biosynthesis seems to be controlled primarily by regulation of HisG enzymatic activity. The protein is ATP phosphoribosyltransferase of Salmonella choleraesuis (strain SC-B67).